Here is a 236-residue protein sequence, read N- to C-terminus: Transmembrane protein 65 (236 aa).

The N-terminal 57 residues, 1-57 (MSRLLPLLRSRTARSLRPGPAAAAAPRPPSWCCCGRGLLALAAPGGPRALGTHPKKE), are a transit peptide targeting the mitochondrion. The Cytoplasmic portion of the chain corresponds to 58-106 (PIEALNTAQGARDFIYSLHSSERSCLLKELHRFESIAIAQEKLEAQPPT). The chain crosses the membrane as a helical span at residues 107-127 (PGQLRYVFIHNAIPFIGFGFL). The Extracellular segment spans residues 128 to 138 (DNAIMIVAGTH). Residues 139 to 161 (IELSIGIILGISTMAAAALGNLV) traverse the membrane as a helical segment. The Cytoplasmic portion of the chain corresponds to 162 to 205 (SDLAGLGLAGYVEALASRLGLSIPDLSPKQVDMWQTRVSSHLGK). Residues 206-226 (AVGVTIGCILGMFPLIFFGGG) traverse the membrane as a helical segment. Residues 227 to 236 (EDDEKLEKKN) lie on the Extracellular side of the membrane.

In terms of assembly, monomer. Homodimer. Interacts with GJA1. Interacts weakly with DSP. Interacts with SCN1B.

It is found in the cell membrane. The protein localises to the mitochondrion inner membrane. Essential for maintaining proper cardiac intercalated disk (ICD) structure and function as well as cardiac conduction velocity in the heart. Its association with SCN1B is required for stabilizing the perinexus in the ICD and for localization of GJA1 and SCN5A to the ICD. May regulate the function of the gap junction protein GJA1 and may contribute to the stability and proper localization of GJA1 to cardiac intercalated disk thereby regulating gap junction communication. Regulates mitochondrial respiration and mitochondrial DNA copy number maintenance. The polypeptide is Transmembrane protein 65 (TMEM65) (Bos taurus (Bovine)).